We begin with the raw amino-acid sequence, 345 residues long: RDS/peripherin-like protein xRDS36 (345 aa).

Residues 1–24 (MVLFKAKFSFQRRVKLAQTLWLLS) lie on the Cytoplasmic side of the membrane. Residues 25–43 (WLSVLVGCLTFGMGIFLKV) traverse the membrane as a helical segment. At 44 to 61 (QLWIHNEVMDNTTAHAVP) the chain is on the lumenal side. N-linked (GlcNAc...) asparagine glycosylation is present at asparagine 54. The chain crosses the membrane as a helical span at residues 62–80 (NTVITAGLVGILLGYFAGK). At 81 to 99 (ISQASMDLTKYQRWKSFMM) the chain is on the cytoplasmic side. Residues 100 to 123 (PFFFLAILSCIVCLAALVLSVALR) form a helical membrane-spanning segment. Residues 124-264 (GTLEESLKIG…LGYYTGIMAT (141 aa)) lie on the Lumenal side of the membrane. Asparagine 229 is a glycosylation site (N-linked (GlcNAc...) asparagine). A helical membrane pass occupies residues 265–290 (NGAAVTLSFLLQASVLVSLRYVQTSM). The Cytoplasmic segment spans residues 291 to 345 (DKIRDPDDVEADTEGFLLEKGVMETVNSSLEKIKDLFKSNQVETAEGGGEGAAGS).

This sequence belongs to the PRPH2/ROM1 family. As to quaternary structure, homodimer; disulfide-linked. In terms of tissue distribution, rod specific.

It is found in the membrane. This chain is RDS/peripherin-like protein xRDS36 (rds36), found in Xenopus laevis (African clawed frog).